The sequence spans 174 residues: Gamma-crystallin C (174 aa).

Beta/gamma crystallin 'Greek key' domains are found at residues 2-40 (GKIT…RVDS) and 41-83 (GCWM…CLIS). Cys23 carries the S-methylcysteine modification. Residues 84–87 (DTSS) are connecting peptide. Beta/gamma crystallin 'Greek key' domains are found at residues 88 to 128 (HRLR…HVLE) and 129 to 171 (GCWV…RRVV).

The protein belongs to the beta/gamma-crystallin family.

Crystallins are the dominant structural components of the vertebrate eye lens. The polypeptide is Gamma-crystallin C (CRYGC) (Bos taurus (Bovine)).